The sequence spans 245 residues: 4-hydroxy-tetrahydrodipicolinate reductase (245 aa).

NAD(+) contacts are provided by residues 7-12, 75-77, and 102-105; these read GAKGKV, GTT, and APNF. The Proton donor/acceptor role is filled by His-132. His-133 is a (S)-2,3,4,5-tetrahydrodipicolinate binding site. Lys-136 serves as the catalytic Proton donor. A (S)-2,3,4,5-tetrahydrodipicolinate-binding site is contributed by 142–143; it reads GT.

It belongs to the DapB family.

The protein localises to the cytoplasm. It carries out the reaction (S)-2,3,4,5-tetrahydrodipicolinate + NAD(+) + H2O = (2S,4S)-4-hydroxy-2,3,4,5-tetrahydrodipicolinate + NADH + H(+). The catalysed reaction is (S)-2,3,4,5-tetrahydrodipicolinate + NADP(+) + H2O = (2S,4S)-4-hydroxy-2,3,4,5-tetrahydrodipicolinate + NADPH + H(+). It participates in amino-acid biosynthesis; L-lysine biosynthesis via DAP pathway; (S)-tetrahydrodipicolinate from L-aspartate: step 4/4. In terms of biological role, catalyzes the conversion of 4-hydroxy-tetrahydrodipicolinate (HTPA) to tetrahydrodipicolinate. The protein is 4-hydroxy-tetrahydrodipicolinate reductase of Mycobacterium sp. (strain JLS).